A 350-amino-acid chain; its full sequence is Selenide, water dikinase (350 aa).

Selenocysteine 15 is an active-site residue. Selenocysteine 15 is a non-standard amino acid (selenocysteine). ATP contacts are provided by residues lysine 18 and 47–49; that span reads HNE. Aspartate 50 lines the Mg(2+) pocket. Residues aspartate 67, aspartate 90, and 138–140 contribute to the ATP site; that span reads GHS. Aspartate 90 lines the Mg(2+) pocket. Aspartate 227 contacts Mg(2+).

This sequence belongs to the selenophosphate synthase 1 family. Class I subfamily. In terms of assembly, homodimer. Mg(2+) serves as cofactor.

It catalyses the reaction hydrogenselenide + ATP + H2O = selenophosphate + AMP + phosphate + 2 H(+). In terms of biological role, synthesizes selenophosphate from selenide and ATP. The polypeptide is Selenide, water dikinase (Nitratidesulfovibrio vulgaris (strain DSM 19637 / Miyazaki F) (Desulfovibrio vulgaris)).